The primary structure comprises 192 residues: UPF0312 protein Avin_03250 (192 aa).

The signal sequence occupies residues Met-1–Ala-23.

It belongs to the UPF0312 family. Type 1 subfamily.

The protein localises to the periplasm. The chain is UPF0312 protein Avin_03250 from Azotobacter vinelandii (strain DJ / ATCC BAA-1303).